The following is a 355-amino-acid chain: Anhydro-N-acetylmuramic acid kinase (355 aa).

9–16 contributes to the ATP binding site; sequence GTSLDGVD.

This sequence belongs to the anhydro-N-acetylmuramic acid kinase family.

It catalyses the reaction 1,6-anhydro-N-acetyl-beta-muramate + ATP + H2O = N-acetyl-D-muramate 6-phosphate + ADP + H(+). It functions in the pathway amino-sugar metabolism; 1,6-anhydro-N-acetylmuramate degradation. The protein operates within cell wall biogenesis; peptidoglycan recycling. Its function is as follows. Catalyzes the specific phosphorylation of 1,6-anhydro-N-acetylmuramic acid (anhMurNAc) with the simultaneous cleavage of the 1,6-anhydro ring, generating MurNAc-6-P. Is required for the utilization of anhMurNAc either imported from the medium or derived from its own cell wall murein, and thus plays a role in cell wall recycling. This Paramagnetospirillum magneticum (strain ATCC 700264 / AMB-1) (Magnetospirillum magneticum) protein is Anhydro-N-acetylmuramic acid kinase.